Reading from the N-terminus, the 70-residue chain is DNA-directed RNA polymerase subunit epsilon (70 aa).

This sequence belongs to the RNA polymerase subunit epsilon family. As to quaternary structure, RNAP is composed of a core of 2 alpha, a beta and a beta' subunit. The core is associated with a delta subunit, and at least one of epsilon or omega. When a sigma factor is associated with the core the holoenzyme is formed, which can initiate transcription.

It catalyses the reaction RNA(n) + a ribonucleoside 5'-triphosphate = RNA(n+1) + diphosphate. In terms of biological role, a non-essential component of RNA polymerase (RNAP). The chain is DNA-directed RNA polymerase subunit epsilon from Bacillus cereus (strain ZK / E33L).